The following is a 326-amino-acid chain: Microtubule-associated protein RP/EB family member 2 (326 aa).

Phosphoserine is present on S9. The Calponin-homology (CH) domain occupies 56–158; sequence TMSRHDIIAW…FIQWFKKFYD (103 aa). Y166 is subject to Phosphotyrosine. Disordered stretches follow at residues 170 to 239 and 297 to 326; these read EARQ…DKDL and YASD…QEEY. The segment at 186 to 326 is DCTN1-binding; that stretch reads QIFNLPKKSH…DQQPQQQEEY (141 aa). The segment covering 199–233 has biased composition (low complexity); it reads SPTAGAAKSSPAAKPGSTPSRPSSAKRASSSGSAS. A phosphoserine mark is found at S218 and S235. The region spanning 235-305 is the EB1 C-terminal domain; sequence SDKDLETQVI…LYASDEQEGQ (71 aa). Residues 258–301 are APC-binding; sequence EGVEKERDFYFGKLREIELLCQEHGQENDDLVQRLMEVLYASDE. The segment covering 300–312 has biased composition (acidic residues); it reads DEQEGQTEEPEVE. Low complexity predominate over residues 317-326; sequence DQQPQQQEEY.

Belongs to the MAPRE family. As to quaternary structure, interacts with DCTN1. Interacts with APC (via C-terminal). Interacts with monomeric and polymerized tubulin. Interacts with SLAIN1. Interacts (via the N-terminal region) with BAG1. Interacts with ASB14. Interacts with HAX1; this interaction is essential for epidermal cell migration. Phosphorylated at Ser-235 by CK2 leading to enhanced cell adhesion. Phosphorylated by CDK1 and AURKB during mitosis reduces the binding affinity of MAPRE2 for microtubules. In terms of processing, ubiquitinated in an ASB14-dependent manner; leading to proteasomal degradation.

It is found in the cytoplasm. The protein resides in the cytoskeleton. In terms of biological role, adapter protein that is involved in microtubule polymerization, and spindle function by stabilizing microtubules and anchoring them at centrosomes. Therefore, ensures mitotic progression and genome stability. Acts as a central regulator of microtubule reorganization in apico-basal epithelial differentiation. Plays a role during oocyte meiosis by regulating microtubule dynamics. Participates in neurite growth by interacting with plexin B3/PLXNB3 and microtubule reorganization during apico-basal epithelial differentiation. Also plays an essential role for cell migration and focal adhesion dynamics. Mechanistically, recruits HAX1 to microtubules in order to regulate focal adhesion dynamics. This chain is Microtubule-associated protein RP/EB family member 2 (Mapre2), found in Rattus norvegicus (Rat).